A 600-amino-acid chain; its full sequence is Elongation factor 4 (600 aa).

Residues 4 to 186 enclose the tr-type G domain; it reads SKIRNFSIIA…AIVNKIPAPY (183 aa). Residues 16 to 21 and 133 to 136 each bind GTP; these read DHGKST and NKVD.

The protein belongs to the TRAFAC class translation factor GTPase superfamily. Classic translation factor GTPase family. LepA subfamily.

Its subcellular location is the cell membrane. The catalysed reaction is GTP + H2O = GDP + phosphate + H(+). In terms of biological role, required for accurate and efficient protein synthesis under certain stress conditions. May act as a fidelity factor of the translation reaction, by catalyzing a one-codon backward translocation of tRNAs on improperly translocated ribosomes. Back-translocation proceeds from a post-translocation (POST) complex to a pre-translocation (PRE) complex, thus giving elongation factor G a second chance to translocate the tRNAs correctly. Binds to ribosomes in a GTP-dependent manner. This is Elongation factor 4 from Mesoplasma florum (strain ATCC 33453 / NBRC 100688 / NCTC 11704 / L1) (Acholeplasma florum).